The primary structure comprises 343 residues: Aldehyde reductase 2 (343 aa).

Tyr177 serves as a coordination point for NADP(+).

It belongs to the NAD(P)-dependent epimerase/dehydratase family. Dihydroflavonol-4-reductase subfamily. Monomer.

The catalysed reaction is a primary alcohol + NADP(+) = an aldehyde + NADPH + H(+). With respect to regulation, inhibited by quercetin and diphenylhydantoin. In terms of biological role, catalyzes the asymmetric reduction of o-substituted aliphatic and aromatic aldehydes and ketones to an S-enantiomer. Reduces ethyl 4-chloro-3-oxobutanoate to ethyl (S)-4-chloro-3-hydroxybutanoate. This chain is Aldehyde reductase 2, found in Sporidiobolus salmonicolor (Yeast-like fungus).